We begin with the raw amino-acid sequence, 226 residues long: AA9 family lytic polysaccharide monooxygenase E (226 aa).

An N-terminal signal peptide occupies residues 1–18; sequence MLANGAIVFLAAALGVSG. A Cu(2+)-binding site is contributed by H19. Cystine bridges form between C56/C174 and C144/C226. N69 carries an N-linked (GlcNAc...) asparagine glycan. H86 serves as a coordination point for Cu(2+). Residues H160 and Q169 each contribute to the O2 site. Y171 lines the Cu(2+) pocket.

This sequence belongs to the polysaccharide monooxygenase AA9 family. Requires Cu(2+) as cofactor.

It localises to the secreted. The catalysed reaction is [(1-&gt;4)-beta-D-glucosyl]n+m + reduced acceptor + O2 = 4-dehydro-beta-D-glucosyl-[(1-&gt;4)-beta-D-glucosyl]n-1 + [(1-&gt;4)-beta-D-glucosyl]m + acceptor + H2O.. In terms of biological role, lytic polysaccharide monooxygenase (LPMO) that depolymerizes crystalline and amorphous polysaccharides via the oxidation of scissile alpha- or beta-(1-4)-glycosidic bonds, yielding C1 and C4 oxidation products. Catalysis by LPMOs requires the reduction of the active-site copper from Cu(II) to Cu(I) by a reducing agent and H(2)O(2) or O(2) as a cosubstrate. Shows endoglucanase activity on tamarind xyloglucan, as well as on beechwood xylan when combined with phosphoric acid swollen cellulose (PASC). Shows no activity on wheat arabinoxylan, konjac glucomannan, acetylated spruce galactoglucomannan, or cellopentaose. The sequence is that of AA9 family lytic polysaccharide monooxygenase E from Thermothielavioides terrestris (strain ATCC 38088 / NRRL 8126) (Thielavia terrestris).